The chain runs to 286 residues: Beta-lactamase SHV-2 (286 aa).

The N-terminal stretch at 1 to 21 (MRYIRLCIISLLATLPLAVHA) is a signal peptide. Ser-66 acts as the Acyl-ester intermediate in catalysis. Cys-73 and Cys-119 are joined by a disulfide. Glu-164 serves as the catalytic Proton acceptor. Position 230-232 (230-232 (KTG)) interacts with substrate.

Belongs to the class-A beta-lactamase family.

It catalyses the reaction a beta-lactam + H2O = a substituted beta-amino acid. Its function is as follows. This enzyme hydrolyzes cefotaxime, ceftazidime and other broad spectrum cephalosporins. The protein is Beta-lactamase SHV-2 (bla) of Escherichia coli.